The primary structure comprises 265 residues: MIKWPWKTNDAGRNMALPWDEALAIPVLANLQPDEQSKLVQLADRFLQQKRLVPLQGFELDPLKNARIALLFCLPVLELGIEWLDGFHEVLIYPAPFVVDDEWQDDFGLVHNQRVVQSGQSWQQGPIILNWLDIQDSFDASGFNLIIHEVAHKLDTRNGDRASGVPLIPLREVAGWEHDLHAAMDNIQDEIDLVGESAASIDAYAATDPAECFAVLSEYFFSAPELFAPRFPALWQRFCQFYQQDPLLRLRQNEDPAGNSSHQLH.

Zn(2+) is bound by residues His-111, His-148, His-152, and Glu-211.

This sequence belongs to the MtfA family. Interacts with Mlc. Requires Zn(2+) as cofactor.

Its subcellular location is the cytoplasm. Involved in the modulation of the activity of the glucose-phosphotransferase system (glucose-PTS). Interacts with the transcriptional repressor Mlc, preventing its interaction with DNA and leading to the modulation of expression of genes regulated by Mlc, including ptsG, which encodes the PTS system glucose-specific EIICB component. Functionally, shows zinc-dependent metallopeptidase activity. This chain is Mlc titration factor A, found in Escherichia fergusonii.